The following is a 29-amino-acid chain: ShK homolog Ask132958 (29 aa).

A ShKT domain is found at 1–29; the sequence is CENTISGCSRADCLLTHRKQGCQKTCGLC. 3 disulfide bridges follow: C1–C29, C8–C22, and C13–C26.

It belongs to the sea anemone type 1 potassium channel toxin family. Type 1a subfamily.

It localises to the secreted. It is found in the nematocyst. Its function is as follows. This peptide is similar to the potassium channel toxin ShK, but does not show activity on potassium channels. It appears that Lys-19, which is expected to occupy the pore of the channel, is not sufficiently accessible for binding, and therefore that this peptide must have a distinct functional role that does not involve potassium channels. It is noteworthy that this peptide is much more stable in the presence of trypsin, chymotrypsin and pepsin than the toxin ShK. The chain is ShK homolog Ask132958 from Anemonia sulcata (Mediterranean snakelocks sea anemone).